The primary structure comprises 68 residues: Protein SlyX homolog (68 aa).

This sequence belongs to the SlyX family.

The polypeptide is Protein SlyX homolog (Brucella anthropi (strain ATCC 49188 / DSM 6882 / CCUG 24695 / JCM 21032 / LMG 3331 / NBRC 15819 / NCTC 12168 / Alc 37) (Ochrobactrum anthropi)).